Here is a 694-residue protein sequence, read N- to C-terminus: MALLLVSLLAFLSLGSGCHHRVCHCSNRVFLCQESKVTEIPSDLPRNALELRFVLTKLRVIPKGAFSGFGDLEKIEISQNDVLEVIEANVFSNLPKLHEIRIEKANNLLYIDHDAFQNLPNLQYLLISNTGIKHLPAVHKIQSLQKVLLDIQDNINIHTVERNSFMGLSFESTILRLSKNGIQEIHNCAFNGTQLDELNLSYNNNLEELPNDVFQGASGPVILDISGTRIHSLPNYGLENLKKLRARSTYNLKKLPSLEKFVALMEANLTYPSHCCAFANWRRQTSELQTTCNKSILRQEVDMTQARGERVSLAEDDESSYPKGFDMMYSEFEYDLCNEVVDVTCSPKPDAFNPCEDIMGYDILRVLIWFISILAITGNIIVLVILITSQYKLTVPRFLMCNLAFADLCIGIYLLLIASVDIHTKSQYHNYAIDWQTGAGCDAAGFFTVFASELSVYTLTAITLERWHTITHAMQLECKVQLRHAASVMLVGWIFAFAVALLPIFGISTYMKVSICLPMDIDSPLSQLYVMSLLVLNVLAFVVICGCYIHIYLTVRNPNIVSSSSDTKIAKRMAILIFTDFLCMAPISFFAISASLKVPLITVSKSKILLVLFYPINSCANPFLYAIFTKNFRRDFFILLSKFGCYEMQAQLYRTETSSTAHISHPRNGHCPPTPRVINGANCTLVPLSHLAQN.

The N-terminal stretch at 1–17 is a signal peptide; the sequence is MALLLVSLLAFLSLGSG. 2 cysteine pairs are disulfide-bonded: Cys18-Cys25 and Cys23-Cys32. An LRRNT domain is found at 18–46; that stretch reads CHHRVCHCSNRVFLCQESKVTEIPSDLPR. Residues 18 to 365 are Extracellular-facing; sequence CHHRVCHCSN…EDIMGYDILR (348 aa). 9 LRR repeats span residues 49–72, 73–97, 98–118, 119–143, 144–169, 170–192, 193–216, 217–240, and 241–259; these read LELRFVLTKLRVIPKGAFSGFGDL, EKIEISQNDVLEVIEANVFSNLPKL, HEIRIEKANNLLYIDHDAFQN, LPNLQYLLISNTGIKHLPAVHKIQS, LQKVLLDIQDNINIHTVERNSFMGLS, FESTILRLSKNGIQEIHNCAFNG, TQLDELNLSYNNNLEELPNDVFQG, ASGPVILDISGTRIHSLPNYGLEN, and LKKLRARSTYNLKKLPSLE. N-linked (GlcNAc...) asparagine glycans are attached at residues Asn191 and Asn199. Asn268 carries N-linked (GlcNAc...) asparagine glycosylation. 4 disulfides stabilise this stretch: Cys275-Cys345, Cys276-Cys292, Cys276-Cys355, and Cys292-Cys337. Asn293 carries an N-linked (GlcNAc...) asparagine glycan. Tyr334 carries the sulfotyrosine modification. Residues 366–386 form a helical membrane-spanning segment; it reads VLIWFISILAITGNIIVLVIL. Topologically, residues 387–397 are cytoplasmic; that stretch reads ITSQYKLTVPR. Residues 398-420 traverse the membrane as a helical segment; sequence FLMCNLAFADLCIGIYLLLIASV. Residues 421–442 are Extracellular-facing; sequence DIHTKSQYHNYAIDWQTGAGCD. A disulfide bridge connects residues Cys441 and Cys516. A helical membrane pass occupies residues 443–464; the sequence is AAGFFTVFASELSVYTLTAITL. Residues 465–484 lie on the Cytoplasmic side of the membrane; sequence ERWHTITHAMQLECKVQLRH. Residues 485 to 507 form a helical membrane-spanning segment; sequence AASVMLVGWIFAFAVALLPIFGI. Residues 508 to 527 lie on the Extracellular side of the membrane; the sequence is STYMKVSICLPMDIDSPLSQ. A helical transmembrane segment spans residues 528 to 549; that stretch reads LYVMSLLVLNVLAFVVICGCYI. Topologically, residues 550-572 are cytoplasmic; sequence HIYLTVRNPNIVSSSSDTKIAKR. Residues 573-596 traverse the membrane as a helical segment; it reads MAILIFTDFLCMAPISFFAISASL. Over 597–607 the chain is Extracellular; that stretch reads KVPLITVSKSK. The helical transmembrane segment at 608–629 threads the bilayer; the sequence is ILLVLFYPINSCANPFLYAIFT. Residues 630-694 are Cytoplasmic-facing; the sequence is KNFRRDFFIL…LVPLSHLAQN (65 aa).

It belongs to the G-protein coupled receptor 1 family. FSH/LSH/TSH subfamily. In terms of assembly, homotrimer. Functions as a homotrimer binding the FSH hormone heterodimer composed of CGA and FSHB. Interacts with ARRB2. Interacts with APPL2; interaction is independent of follicle stimulating hormone stimulation. In terms of processing, N-glycosylated; indirectly required for FSH-binding, possibly via a conformational change that allows high affinity binding of hormone. Sulfated.

The protein resides in the cell membrane. In terms of biological role, g protein-coupled receptor for follitropin, the follicle-stimulating hormone. Through cAMP production activates the downstream PI3K-AKT and ERK1/ERK2 signaling pathways. In Equus caballus (Horse), this protein is Follicle-stimulating hormone receptor (FSHR).